Here is a 258-residue protein sequence, read N- to C-terminus: Ubiquinone/menaquinone biosynthesis C-methyltransferase UbiE (258 aa).

S-adenosyl-L-methionine contacts are provided by residues Thr-81, Asp-102, and 130–131 (NA).

The protein belongs to the class I-like SAM-binding methyltransferase superfamily. MenG/UbiE family.

The enzyme catalyses a 2-demethylmenaquinol + S-adenosyl-L-methionine = a menaquinol + S-adenosyl-L-homocysteine + H(+). The catalysed reaction is a 2-methoxy-6-(all-trans-polyprenyl)benzene-1,4-diol + S-adenosyl-L-methionine = a 5-methoxy-2-methyl-3-(all-trans-polyprenyl)benzene-1,4-diol + S-adenosyl-L-homocysteine + H(+). It functions in the pathway quinol/quinone metabolism; menaquinone biosynthesis; menaquinol from 1,4-dihydroxy-2-naphthoate: step 2/2. Its pathway is cofactor biosynthesis; ubiquinone biosynthesis. Functionally, methyltransferase required for the conversion of demethylmenaquinol (DMKH2) to menaquinol (MKH2) and the conversion of 2-polyprenyl-6-methoxy-1,4-benzoquinol (DDMQH2) to 2-polyprenyl-3-methyl-6-methoxy-1,4-benzoquinol (DMQH2). The sequence is that of Ubiquinone/menaquinone biosynthesis C-methyltransferase UbiE from Rhizobium meliloti (strain 1021) (Ensifer meliloti).